The following is an 89-amino-acid chain: Co-chaperonin GroES (89 aa).

This sequence belongs to the GroES chaperonin family. In terms of assembly, heptamer of 7 subunits arranged in a ring. Interacts with the chaperonin GroEL.

The protein resides in the cytoplasm. Its function is as follows. Together with the chaperonin GroEL, plays an essential role in assisting protein folding. The GroEL-GroES system forms a nano-cage that allows encapsulation of the non-native substrate proteins and provides a physical environment optimized to promote and accelerate protein folding. GroES binds to the apical surface of the GroEL ring, thereby capping the opening of the GroEL channel. In Kosmotoga olearia (strain ATCC BAA-1733 / DSM 21960 / TBF 19.5.1), this protein is Co-chaperonin GroES.